The sequence spans 338 residues: UPF0194 membrane protein in asrC 5'region (338 aa).

A signal peptide spans 1–23 (MAISPKKRALALVVVLIVAGAVA). Residues 148 to 207 (KQSLDNAAAALKTARANLDRAQQALTLAIKGPRKEDIAAARQQLQADKAGLSLARRELTD) are a coiled coil.

The protein belongs to the UPF0194 family.

Its subcellular location is the periplasm. This chain is UPF0194 membrane protein in asrC 5'region, found in Acidithiobacillus ferridurans.